Consider the following 1399-residue polypeptide: DNA-directed RNA polymerase subunit beta' (1399 aa).

4 residues coordinate Zn(2+): Cys-71, Cys-73, Cys-86, and Cys-89. Mg(2+)-binding residues include Asp-462, Asp-464, and Asp-466. Zn(2+)-binding residues include Cys-810, Cys-884, Cys-891, and Cys-894. The interval 1376–1399 (EREKQAAITPAAPEAEPLALPPAE) is disordered.

The protein belongs to the RNA polymerase beta' chain family. In terms of assembly, the RNAP catalytic core consists of 2 alpha, 1 beta, 1 beta' and 1 omega subunit. When a sigma factor is associated with the core the holoenzyme is formed, which can initiate transcription. Mg(2+) serves as cofactor. It depends on Zn(2+) as a cofactor.

The enzyme catalyses RNA(n) + a ribonucleoside 5'-triphosphate = RNA(n+1) + diphosphate. Functionally, DNA-dependent RNA polymerase catalyzes the transcription of DNA into RNA using the four ribonucleoside triphosphates as substrates. The protein is DNA-directed RNA polymerase subunit beta' of Afipia carboxidovorans (strain ATCC 49405 / DSM 1227 / KCTC 32145 / OM5) (Oligotropha carboxidovorans).